A 285-amino-acid polypeptide reads, in one-letter code: Iodotyrosine deiodinase 1 (285 aa).

A helical membrane pass occupies residues 1–21 (MFLLTPVLVAVVCILVVWVFK). Residues 96 to 100 (RRSVR) and 124 to 125 (SG) contribute to the FMN site. Ala126, Glu153, Tyr157, and Lys178 together coordinate 3,5-diiodo-L-tyrosine. 4 residues coordinate 3-iodo-L-tyrosine: Ala126, Glu153, Tyr157, and Lys178. Residues 233 to 235 (TTT) and Arg275 contribute to the FMN site.

Belongs to the nitroreductase family. In terms of assembly, homodimer. FMN is required as a cofactor.

It is found in the cell membrane. Its subcellular location is the cytoplasmic vesicle membrane. It carries out the reaction 2 iodide + L-tyrosine + 2 NADP(+) = 3,5-diiodo-L-tyrosine + 2 NADPH + H(+). It catalyses the reaction iodide + L-tyrosine + NADP(+) = 3-iodo-L-tyrosine + NADPH. The catalysed reaction is 3-iodo-L-tyrosine + iodide + NADP(+) = 3,5-diiodo-L-tyrosine + NADPH + H(+). The enzyme catalyses L-tyrosine + chloride + NADP(+) = 3-chloro-L-tyrosine + NADPH. It carries out the reaction bromide + L-tyrosine + NADP(+) = 3-bromo-L-tyrosine + NADPH. Functionally, catalyzes the dehalogenation of halotyrosines such as 3-bromo-L-tyrosine, 3-chloro-L-tyrosine, 3-iodo-L-tyrosine and 3,5-diiodo-L-tyrosine. During thyroid hormone biosynthesis, facilitates iodide salvage by catalysing the oxidative NADPH-dependent deiodination of the halogenated by-products of thyroid hormone production, monoiodotyrosine (L-MIT) and diiodotyrosine (L-DIT). The scavanged iodide can then reenter the hormone-producing pathways. Acts more efficiently on 3-iodo-L-tyrosine than 3,5-diiodo-L-tyrosine. The polypeptide is Iodotyrosine deiodinase 1 (Iyd) (Mus musculus (Mouse)).